The primary structure comprises 842 residues: Leucine--tRNA ligase (842 aa).

A 'HIGH' region motif is present at residues Pro62 to His72. Residues Gly390–Asp414 form a disordered region. A 'KMSKS' region motif is present at residues Ala607–Ser611. An ATP-binding site is contributed by Lys610.

Belongs to the class-I aminoacyl-tRNA synthetase family.

It localises to the cytoplasm. The enzyme catalyses tRNA(Leu) + L-leucine + ATP = L-leucyl-tRNA(Leu) + AMP + diphosphate. The chain is Leucine--tRNA ligase from Paenarthrobacter aurescens (strain TC1).